The chain runs to 1356 residues: MAQSFTGKKRIRKSFGRIPEAVQMPNLIEVQRSSYEQFLQRETRPGLRRDEGVEAVFKSVFPIKDFNERAVLEYVSYEFEEPKYDVEECIQRDMTFAAPLKVKLRLIVFETEEETGARSVKDIKEQDVYMGDIPLMTDKGTFIVNGTERVIVSQMHRSPGVFFDHDKGKTHASGKLLFAARVIPYRGSWLDFEFDAKDIVYVRIDRRRKLPATTFLYALGMDGEEILTTFYDVVPFEKRSGGWATPYKPERWRGVKPEFPLVDADTGEEVAPAGTKITARQAKKFADGGLKTLLLAPEALTGRYLARDAVNMATGEIYAEAGDELDVTSIQALADQGFSTIDVLDIDHVTVGAYMRNTLRVDKNAIREDALFDIYRVMRPGEPPTVEAAEAMFKSLFFDAERYDLSSVGRVKMNMRLEQDVSDEVRILRKEDVLAVLKVLVGLRDGRGEIDDIDNLGNRRVRSVGELLENQYRVGLLRMERAIKERMSSVDIDTVMPHDLINAKPAAAAVREFFGSSQLSQFMDQTNPLSEITHKRRLSALGPGGLTRERAGFEVRDVHPTHYGRICPIETPEGPNIGLINSLATHARVNKYGFIESPYRRVKDGKPQDEVVYMSAMEESKHVIAQSNIKVAEGEIVEDLVPGRINGEPTLLQKETVDLMDVSPRQVVSVAAALIPFLENDDANRALMGSNMQRQAVPLVQSDAPLVGTGMEAVVARDSGAVVIAKRTGVVEQIDGTRIVIRATEETDPARSGVDIYRMSKFQRSNQSTCINQRPLVKVGDRIVAGDIIADGPSTELGELALGRNALVAFMPWNGYNFEDSILISERIVRDDVFTSIHIEEFEVMARDTKLGPEEITRDIPNVGEEALRNLDEAGIVAIGAEVQPGDILVGKVTPKGESPMTPEEKLLRAIFGEKASDVRDTSLRLPPGVAGTIVDVRVFNRHGVDKDERALAIERAEIDRLGKDRDDEFAILNRNISGRLKELLIGKVALSGPKGLSRGEITAEGLAQVASGLWWQIALEDEKAMGELESLRRLFDENRKRLDRRFEDKVDKLQRGDELPPGVMKMVKVFVAVKRKLQPGDKMAGRHGNKGVISRILPIEDMPFLADGTHVDVVLNPLGVPSRMNVGQIFETHLGWACANLGKQITNLLEDWQQGGQKQALVERLTEIYGPDEELPDTEEGLVELARNLGKGVPIATPVFDGARMDDIEGHLEMAGVNKSGQSILFDGLTGEQFKRPVTVGYIYMLKLHHLVDDKIHARSIGPYSLVTQQPLGGKAQFGGQRFGEMEVWALEAYGAAYTLQEMLTVKSDDVAGRTKVYESIVRGDDTFEAGIPESFNVLVKEMRSLGLNVELENS.

Belongs to the RNA polymerase beta chain family. As to quaternary structure, the RNAP catalytic core consists of 2 alpha, 1 beta, 1 beta' and 1 omega subunit. When a sigma factor is associated with the core the holoenzyme is formed, which can initiate transcription.

The enzyme catalyses RNA(n) + a ribonucleoside 5'-triphosphate = RNA(n+1) + diphosphate. In terms of biological role, DNA-dependent RNA polymerase catalyzes the transcription of DNA into RNA using the four ribonucleoside triphosphates as substrates. The polypeptide is DNA-directed RNA polymerase subunit beta (Caulobacter vibrioides (strain ATCC 19089 / CIP 103742 / CB 15) (Caulobacter crescentus)).